The primary structure comprises 476 residues: Bifunctional protein HldE (476 aa).

The segment at 1–318 (MKVTLPDFRR…ENAIRGRAET (318 aa)) is ribokinase. Residue 195–198 (NLSE) coordinates ATP. Residue Asp-264 is part of the active site. Residues 344-476 (MTNGIFDILH…IIQSIKNGRG (133 aa)) are cytidylyltransferase.

It in the N-terminal section; belongs to the carbohydrate kinase PfkB family. In the C-terminal section; belongs to the cytidylyltransferase family. Homodimer.

It carries out the reaction D-glycero-beta-D-manno-heptose 7-phosphate + ATP = D-glycero-beta-D-manno-heptose 1,7-bisphosphate + ADP + H(+). The catalysed reaction is D-glycero-beta-D-manno-heptose 1-phosphate + ATP + H(+) = ADP-D-glycero-beta-D-manno-heptose + diphosphate. It participates in nucleotide-sugar biosynthesis; ADP-L-glycero-beta-D-manno-heptose biosynthesis; ADP-L-glycero-beta-D-manno-heptose from D-glycero-beta-D-manno-heptose 7-phosphate: step 1/4. It functions in the pathway nucleotide-sugar biosynthesis; ADP-L-glycero-beta-D-manno-heptose biosynthesis; ADP-L-glycero-beta-D-manno-heptose from D-glycero-beta-D-manno-heptose 7-phosphate: step 3/4. Its function is as follows. Catalyzes the phosphorylation of D-glycero-D-manno-heptose 7-phosphate at the C-1 position to selectively form D-glycero-beta-D-manno-heptose-1,7-bisphosphate. Functionally, catalyzes the ADP transfer from ATP to D-glycero-beta-D-manno-heptose 1-phosphate, yielding ADP-D-glycero-beta-D-manno-heptose. The polypeptide is Bifunctional protein HldE (Yersinia pseudotuberculosis serotype O:1b (strain IP 31758)).